Here is a 396-residue protein sequence, read N- to C-terminus: Elongation factor Tu (396 aa).

The tr-type G domain maps to 10 to 205 (KPHVNIGTIG…AVDESIPDPV (196 aa)). Residues 19–26 (GHVDHGKT) form a G1 region. 19–26 (GHVDHGKT) contacts GTP. Threonine 26 contributes to the Mg(2+) binding site. The G2 stretch occupies residues 62–66 (GITIN). Residues 83 to 86 (DAPG) are G3. Residues 83-87 (DAPGH) and 138-141 (NKAD) contribute to the GTP site. Residues 138–141 (NKAD) form a G4 region. The segment at 175–177 (SAL) is G5.

The protein belongs to the TRAFAC class translation factor GTPase superfamily. Classic translation factor GTPase family. EF-Tu/EF-1A subfamily. Monomer.

Its subcellular location is the cytoplasm. It catalyses the reaction GTP + H2O = GDP + phosphate + H(+). In terms of biological role, GTP hydrolase that promotes the GTP-dependent binding of aminoacyl-tRNA to the A-site of ribosomes during protein biosynthesis. The sequence is that of Elongation factor Tu from Mycobacterium sp. (strain JLS).